The primary structure comprises 178 residues: ATP synthase subunit delta (178 aa).

Belongs to the ATPase delta chain family. F-type ATPases have 2 components, F(1) - the catalytic core - and F(0) - the membrane proton channel. F(1) has five subunits: alpha(3), beta(3), gamma(1), delta(1), epsilon(1). F(0) has three main subunits: a(1), b(2) and c(10-14). The alpha and beta chains form an alternating ring which encloses part of the gamma chain. F(1) is attached to F(0) by a central stalk formed by the gamma and epsilon chains, while a peripheral stalk is formed by the delta and b chains.

Its subcellular location is the cell membrane. F(1)F(0) ATP synthase produces ATP from ADP in the presence of a proton or sodium gradient. F-type ATPases consist of two structural domains, F(1) containing the extramembraneous catalytic core and F(0) containing the membrane proton channel, linked together by a central stalk and a peripheral stalk. During catalysis, ATP synthesis in the catalytic domain of F(1) is coupled via a rotary mechanism of the central stalk subunits to proton translocation. Its function is as follows. This protein is part of the stalk that links CF(0) to CF(1). It either transmits conformational changes from CF(0) to CF(1) or is implicated in proton conduction. This Streptococcus agalactiae serotype V (strain ATCC BAA-611 / 2603 V/R) protein is ATP synthase subunit delta.